The sequence spans 343 residues: Squamosa promoter-binding-like protein 11 (343 aa).

A disordered region spans residues 1-48 (MECNPVSSTTSSSLLWDWDATASAEPPPPPGKRGGRDSSSASASAKRG). Low complexity-rich tracts occupy residues 7-19 (SSTT…WDWD) and 37-48 (DSSSASASAKRG). The SBP-type zinc finger occupies 64 to 141 (APRCQVEGCG…SDHNARRRKP (78 aa)). 8 residues coordinate Zn(2+): Cys-67, Cys-72, Cys-89, His-92, Cys-108, Cys-111, His-115, and Cys-127. Positions 124–140 (KRSCRRRLSDHNARRRK) match the Bipartite nuclear localization signal motif.

In terms of tissue distribution, expressed in stems, leaf sheaths, and young panicles.

The protein resides in the nucleus. Trans-acting factor that binds specifically to the consensus nucleotide sequence 5'-TNCGTACAA-3'. May be involved in panicle development. The chain is Squamosa promoter-binding-like protein 11 (SPL11) from Oryza sativa subsp. japonica (Rice).